Consider the following 50-residue polypeptide: Inducible serine protease inhibitor 1 (50 aa).

The interval 1 to 27 (DLVXGTNFXKNNPXSTRVAANSXRSPS) is disordered. Over residues 8–25 (FXKNNPXSTRVAANSXRS) the composition is skewed to polar residues.

Its function is as follows. Inhibits trypsin and the toxin protease PR2 of M.anisopliae. Does not inhibit chymotrypsin, subtilisin Carlsberg, proteinase K, porcine pancreatic elastase and the toxin protease PR1 of M.anisopliae. This is Inducible serine protease inhibitor 1 from Galleria mellonella (Greater wax moth).